The primary structure comprises 192 residues: Ion-translocating oxidoreductase complex subunit A (192 aa).

6 consecutive transmembrane segments (helical) span residues Ile5 to Leu25, Val39 to Val59, Ile63 to Val83, Leu102 to Leu122, Val134 to Leu154, and Ser171 to Val191.

The protein belongs to the NqrDE/RnfAE family. The complex is composed of six subunits: RnfA, RnfB, RnfC, RnfD, RnfE and RnfG.

It is found in the cell inner membrane. In terms of biological role, part of a membrane-bound complex that couples electron transfer with translocation of ions across the membrane. The sequence is that of Ion-translocating oxidoreductase complex subunit A from Haemophilus influenzae (strain ATCC 51907 / DSM 11121 / KW20 / Rd).